The following is a 330-amino-acid chain: Src kinase-associated phosphoprotein 2-A (330 aa).

Positions 53 to 77 (QDFQDKAETDDQEENDGFSLPPDAV) are disordered. The 104-residue stretch at 105–208 (DYLRAGYLEK…WINVIMNARG (104 aa)) folds into the PH domain. Positions 228–261 (SHEEDIYEELPEESEKPVTGSETPKATPVPVNNT) are disordered. The segment covering 247–261 (GSETPKATPVPVNNT) has biased composition (polar residues). Residues 268-329 (DYANFYRGLW…PKAYIIEMYD (62 aa)) form the SH3 domain.

The protein belongs to the SKAP family. Post-translationally, phosphorylated on tyrosines.

It localises to the cytoplasm. In terms of biological role, may be involved in B-cell and macrophage adhesion processes. May play a role in src signaling pathway. The polypeptide is Src kinase-associated phosphoprotein 2-A (skap2-a) (Xenopus laevis (African clawed frog)).